Reading from the N-terminus, the 391-residue chain is Protein CapJ (391 aa).

Its pathway is capsule biogenesis; capsule polysaccharide biosynthesis. Functionally, required for the biosynthesis of type 1 capsular polysaccharide. The polypeptide is Protein CapJ (capJ) (Staphylococcus aureus).